The sequence spans 140 residues: Large ribosomal subunit protein uL11 (140 aa).

It belongs to the universal ribosomal protein uL11 family. Part of the ribosomal stalk of the 50S ribosomal subunit. Interacts with L10 and the large rRNA to form the base of the stalk. L10 forms an elongated spine to which L12 dimers bind in a sequential fashion forming a multimeric L10(L12)X complex. One or more lysine residues are methylated.

In terms of biological role, forms part of the ribosomal stalk which helps the ribosome interact with GTP-bound translation factors. The protein is Large ribosomal subunit protein uL11 of Syntrophotalea carbinolica (strain DSM 2380 / NBRC 103641 / GraBd1) (Pelobacter carbinolicus).